Consider the following 187-residue polypeptide: Elongation factor P (187 aa).

It belongs to the elongation factor P family.

Its subcellular location is the cytoplasm. The protein operates within protein biosynthesis; polypeptide chain elongation. In terms of biological role, involved in peptide bond synthesis. Stimulates efficient translation and peptide-bond synthesis on native or reconstituted 70S ribosomes in vitro. Probably functions indirectly by altering the affinity of the ribosome for aminoacyl-tRNA, thus increasing their reactivity as acceptors for peptidyl transferase. This Helicobacter pylori (strain P12) protein is Elongation factor P.